A 547-amino-acid polypeptide reads, in one-letter code: Inositol 1,4,5-trisphosphate receptor-interacting protein-like 1 (547 aa).

The signal sequence occupies residues 1–16 (MAVISLLFLAVMYVVH). The Extracellular portion of the chain corresponds to 17–96 (HPLMVSDRMD…PFQASGQDGG (80 aa)). Residues 28–66 (DTLARSRQLEKRMSEEMRQLEIEFEERSRAAEEKQKAEN) are a coiled coil. Residues 97–117 (PLGWMLGNLWNAGLFCLFLIF) form a helical membrane-spanning segment. The Cytoplasmic segment spans residues 118 to 547 (ELLRQNMQHE…LPCSPLAGGL (430 aa)).

It belongs to the ITPRIP family.

It is found in the cell membrane. Its function is as follows. Functions as a ligand of CD3E, inhibiting TCR-CD3 complex signaling to regulate T cell activation. Induces stable CD3E-NCK1 binding, thereby preventing the CD3E-ZAP70 interaction and subsequently inhibiting the activation of the downstream ERK-NFkB signaling cascade and calcium influx. This is Inositol 1,4,5-trisphosphate receptor-interacting protein-like 1 (Itpripl1) from Rattus norvegicus (Rat).